A 508-amino-acid polypeptide reads, in one-letter code: MILVLDFGSQYTQLIARRLRERGIYTEIVPFFESIENIQKKAPKGLILSGGPASVYAKDAYKPSGKIFDLNVPILGICYGMQYLVDFFGGVVVGANEQEFGKAVLEITQNSVIFEGVKIKSLVWMSHMDKVIELPKGFTTLAKSPNSPHCAIENGKIFGLQFHPEVVQSEEGGKILENFALLVCGCEKTWGMQHFAQREIARLKEKIANAKVLCAVSGGVDSTVVATLLHRAIKDNLIAVFVDHGLLRKNEKERVQAMFKDLKIPLNTIDAKEVFLSKLKGVSEPELKRKIIGETFIEVFEKEAKKHHLKGKIEFLAQGTLYPDVIESVSVKGPSKVIKTHHNVGGLPEWMDFKLIEPLRELFKDEVRLLGKELGVSQDFLMRHPFPGPGLAVRILGEISESKIKRLQEADFIFIEELKKANLYDKVWQAFCVLLNVNSVGVMGDNRTYENAICLRAVNASDGMTASFSFLEHSFLEKVSNRITNEVSGINRVVYDITSKPPGTIEWE.

The Glutamine amidotransferase type-1 domain maps to 1-189 (MILVLDFGSQ…ALLVCGCEKT (189 aa)). Cys78 functions as the Nucleophile in the catalytic mechanism. Residues His163 and Glu165 contribute to the active site. The GMPS ATP-PPase domain occupies 190 to 383 (WGMQHFAQRE…LGVSQDFLMR (194 aa)). Residue 217–223 (SGGVDST) coordinates ATP.

As to quaternary structure, homodimer.

It catalyses the reaction XMP + L-glutamine + ATP + H2O = GMP + L-glutamate + AMP + diphosphate + 2 H(+). It participates in purine metabolism; GMP biosynthesis; GMP from XMP (L-Gln route): step 1/1. Functionally, catalyzes the synthesis of GMP from XMP. This is GMP synthase [glutamine-hydrolyzing] (guaA) from Helicobacter pylori (strain ATCC 700392 / 26695) (Campylobacter pylori).